The sequence spans 164 residues: Protein SprT (164 aa).

One can recognise a SprT-like domain in the interval 14–156; sequence QQAETFFKRP…LCKRCRETLV (143 aa). A Zn(2+)-binding site is contributed by His69. The active site involves Glu70. His73 serves as a coordination point for Zn(2+).

The protein belongs to the SprT family. Zn(2+) serves as cofactor.

It localises to the cytoplasm. The chain is Protein SprT from Pseudomonas putida (strain W619).